The sequence spans 305 residues: Ribonucleoside-diphosphate reductase small subunit (305 aa).

The Fe cation site is built by E64, E94, and H97. Residue Y101 is part of the active site. Residues 150–170 (ILLFLLVEGIFFISSFFSIGL) form a helical membrane-spanning segment. Residues E157, E191, and H194 each coordinate Fe cation.

This sequence belongs to the ribonucleoside diphosphate reductase small chain family. Heterotetramer composed of a homodimer of the large subunit (R1) and a homodimer of the small subunit (R2). Larger multisubunit protein complex are also active, composed of (R1)n(R2)n. Fe cation serves as cofactor.

It is found in the host membrane. It carries out the reaction a 2'-deoxyribonucleoside 5'-diphosphate + [thioredoxin]-disulfide + H2O = a ribonucleoside 5'-diphosphate + [thioredoxin]-dithiol. Its function is as follows. Ribonucleoside-diphosphate reductase holoenzyme provides the precursors necessary for viral DNA synthesis. Allows virus growth in non-dividing cells, as well as reactivation from latency in infected hosts. Catalyzes the biosynthesis of deoxyribonucleotides from the corresponding ribonucleotides. This chain is Ribonucleoside-diphosphate reductase small subunit, found in Saimiri sciureus (Common squirrel monkey).